Consider the following 300-residue polypeptide: F-box protein PP2-A15 (300 aa).

The region spanning 17–63 is the F-box domain; the sequence is MGPGLGDIPESCVACVFMYLTPPEICNLAGLNRSFRGAASSDSVWEK.

The polypeptide is F-box protein PP2-A15 (PP2A15) (Arabidopsis thaliana (Mouse-ear cress)).